We begin with the raw amino-acid sequence, 708 residues long: Leukotoxin translocation ATP-binding protein LktB (708 aa).

The Peptidase C39 domain maps to 1-126 (MEANHQRNDL…ACYQGQLILV (126 aa)). An ABC transmembrane type-1 domain is found at 155–437 (FLETLIVSIF…LAQLWQDFQQ (283 aa)). A run of 5 helical transmembrane segments spans residues 159 to 179 (LIVS…FQVV), 192 to 212 (LNII…LSGL), 270 to 290 (ALTS…MWYY), 296 to 316 (LVIL…SPIL), and 389 to 409 (VMVI…LSIG). Positions 469 to 704 (ISFKNIRFRY…SNGLYSYLHQ (236 aa)) constitute an ABC transporter domain. 503 to 510 (GRSGSGKS) serves as a coordination point for ATP.

It belongs to the ABC transporter superfamily. Protein-1 exporter (TC 3.A.1.109) family. As to quaternary structure, homodimer.

The protein localises to the cell inner membrane. It catalyses the reaction ATP + H2O + proteinSide 1 = ADP + phosphate + proteinSide 2.. In terms of biological role, part of the ABC transporter complex LktBD involved in leukotoxin export. Transmembrane domains (TMD) form a pore in the inner membrane and the ATP-binding domain (NBD) is responsible for energy generation. This chain is Leukotoxin translocation ATP-binding protein LktB (lktB), found in Mannheimia haemolytica (Pasteurella haemolytica).